Consider the following 550-residue polypeptide: Eukaryotic translation initiation factor 3 subunit D-2 (550 aa).

The segment at 108-152 (RTRGRTGRGTPNIASLGGSTAGGATASTTKYGKGRHTRNTQNVGR) is disordered. The span at 115–136 (RGTPNIASLGGSTAGGATASTT) shows a compositional bias: low complexity. Residues 290–304 (QFDLLTVNETSVEPP) form an RNA gate region. The interval 527-550 (PENAFDSDRDEEESSEPLSNSNDN) is disordered.

Belongs to the eIF-3 subunit D family. As to quaternary structure, component of the eukaryotic translation initiation factor 3 (eIF-3) complex. The eIF-3 complex interacts with pix.

It is found in the cytoplasm. MRNA cap-binding component of the eukaryotic translation initiation factor 3 (eIF-3) complex, which is involved in protein synthesis of a specialized repertoire of mRNAs and, together with other initiation factors, stimulates binding of mRNA and methionyl-tRNAi to the 40S ribosome. The eIF-3 complex specifically targets and initiates translation of a subset of mRNAs involved in cell proliferation. In the eIF-3 complex, eif3d specifically recognizes and binds the 7-methylguanosine cap of a subset of mRNAs. The sequence is that of Eukaryotic translation initiation factor 3 subunit D-2 from Drosophila sechellia (Fruit fly).